We begin with the raw amino-acid sequence, 500 residues long: MSEVEHQELDLNGEMLARREKLAKLREQGNPFPNTFRRDAYAEKLHAQYDEVEGEALKEQDIQVKVAGRIMLKRVMGKASFFTIQDVSGQIQLYVARDNLAEGVYADKVSMWDLGDIVGVAGTLFKTKTGELTVRCSEVELLTKSLRPLPNKVQGLTDQETRYRQRYLDLISNEESRRTFMIRSKVVSGIRQFFLEKDFIEVETPMLQVIPGGAAAKPFITHHNALDVDMYLRIAPELYLKRLVVGGFERVFELNRNFRNEGVSVRHNPEFTMIEYYQAYADYHDLMDNTEELLRKLAIDILGTTTVPYGEYVFDFGKPFERITMHDAIVKYGNGITREDLDSFEKSVEIAKGLGIEIQKSWGLGSVVNAIFEEVAEHQLIQPTFLMAHPAEISPLARRNDENPEVTDRFELFIGGREIGNGFSELNDAEDQAERFDAQVAAKDAGDDEAMFKDEDFVVALEHGLPPTAGEGLGIDRLAMIFANAPSIRDVILFPAMRQK.

Positions 411 and 418 each coordinate Mg(2+).

This sequence belongs to the class-II aminoacyl-tRNA synthetase family. Homodimer. It depends on Mg(2+) as a cofactor.

It is found in the cytoplasm. It carries out the reaction tRNA(Lys) + L-lysine + ATP = L-lysyl-tRNA(Lys) + AMP + diphosphate. This is Lysine--tRNA ligase from Actinobacillus pleuropneumoniae serotype 5b (strain L20).